The following is a 173-amino-acid chain: Bifunctional protein PyrR (173 aa).

A PRPP-binding motif is present at residues 93–105 (VILVDDVLYTGRT).

Belongs to the purine/pyrimidine phosphoribosyltransferase family. PyrR subfamily. In terms of assembly, homodimer and homohexamer; in equilibrium.

The enzyme catalyses UMP + diphosphate = 5-phospho-alpha-D-ribose 1-diphosphate + uracil. Regulates transcriptional attenuation of the pyrimidine nucleotide (pyr) operon by binding in a uridine-dependent manner to specific sites on pyr mRNA. This disrupts an antiterminator hairpin in the RNA and favors formation of a downstream transcription terminator, leading to a reduced expression of downstream genes. Functionally, also displays a weak uracil phosphoribosyltransferase activity which is not physiologically significant. This Streptococcus pneumoniae (strain 70585) protein is Bifunctional protein PyrR.